Here is a 362-residue protein sequence, read N- to C-terminus: G-protein coupled receptor 6 (362 aa).

The Extracellular portion of the chain corresponds to 1-74 (MNASAASLND…PGLLLPAVNP (74 aa)). Asn-2, Asn-9, and Asn-51 each carry an N-linked (GlcNAc...) asparagine glycan. A helical transmembrane segment spans residues 75-94 (WDVLLCVSGTVIAGENALVV). Over 95–106 (ALIASTPALRTP) the chain is Cytoplasmic. Residues 107 to 130 (MFVLVGSLATADLLAGCGLILHFV) traverse the membrane as a helical segment. At 131–142 (FQYLVPSETVSL) the chain is on the extracellular side. A helical membrane pass occupies residues 143–164 (LTVGFLVASFAASVSSLLAITV). Residues 165–185 (DRYLSLYNALTYYSRRTLLGV) are Cytoplasmic-facing. The chain crosses the membrane as a helical span at residues 186 to 205 (HLLLAATWTVSLGLGLLPVL). At 206–230 (GWNCLAERAACSVVRPLARSHVALL) the chain is on the extracellular side. A helical transmembrane segment spans residues 231-249 (SAAFFMVFGIMLHLYVRIC). Residues 250–277 (QVVWRHAHQIALQQHCLAPPHLAATRKG) lie on the Cytoplasmic side of the membrane. A helical membrane pass occupies residues 278 to 304 (VGTLAVVLGTFGASWLPFAIYCVVGSH). Residues 305 to 309 (EDPAV) are Extracellular-facing. The chain crosses the membrane as a helical span at residues 310-331 (YTYATLLPATYNSMINPIIYAF). The Cytoplasmic portion of the chain corresponds to 332 to 362 (RNQEIQRALWLLLCGCFQSKVPFRSRSPSEV). Residue Cys-345 is the site of S-palmitoyl cysteine attachment. 3 positions are modified to phosphoserine: Ser-356, Ser-358, and Ser-360.

Belongs to the G-protein coupled receptor 1 family.

It localises to the cell membrane. Orphan receptor with constitutive G(s) signaling activity that activate cyclic AMP. Promotes neurite outgrowth and blocks myelin inhibition in neurons. This Homo sapiens (Human) protein is G-protein coupled receptor 6 (GPR6).